The sequence spans 205 residues: Holliday junction branch migration complex subunit RuvA (205 aa).

Residues 1-64 form a domain I region; the sequence is MIGKLKGVID…EDQIKLFGFR (64 aa). A domain II region spans residues 65-143; the sequence is TDHEREWFRL…SFANVDPTVV (79 aa). The tract at residues 144-154 is flexible linker; sequence HLAGDLDDQRA. Residues 154–205 are domain III; sequence APRPVRDAISALVNLGYGQPQATAAIAAASRGAGENAETAQLIRLGLKELSK.

It belongs to the RuvA family. In terms of assembly, homotetramer. Forms an RuvA(8)-RuvB(12)-Holliday junction (HJ) complex. HJ DNA is sandwiched between 2 RuvA tetramers; dsDNA enters through RuvA and exits via RuvB. An RuvB hexamer assembles on each DNA strand where it exits the tetramer. Each RuvB hexamer is contacted by two RuvA subunits (via domain III) on 2 adjacent RuvB subunits; this complex drives branch migration. In the full resolvosome a probable DNA-RuvA(4)-RuvB(12)-RuvC(2) complex forms which resolves the HJ.

Its subcellular location is the cytoplasm. Its function is as follows. The RuvA-RuvB-RuvC complex processes Holliday junction (HJ) DNA during genetic recombination and DNA repair, while the RuvA-RuvB complex plays an important role in the rescue of blocked DNA replication forks via replication fork reversal (RFR). RuvA specifically binds to HJ cruciform DNA, conferring on it an open structure. The RuvB hexamer acts as an ATP-dependent pump, pulling dsDNA into and through the RuvAB complex. HJ branch migration allows RuvC to scan DNA until it finds its consensus sequence, where it cleaves and resolves the cruciform DNA. The chain is Holliday junction branch migration complex subunit RuvA from Nitrobacter winogradskyi (strain ATCC 25391 / DSM 10237 / CIP 104748 / NCIMB 11846 / Nb-255).